A 216-amino-acid polypeptide reads, in one-letter code: Protein Syd (216 aa).

This sequence belongs to the Syd family.

The protein resides in the cell inner membrane. Its function is as follows. Interacts with the SecY protein in vivo. May bind preferentially to an uncomplexed state of SecY, thus functioning either as a chelating agent for excess SecY in the cell or as a regulatory factor that negatively controls the translocase function. The sequence is that of Protein Syd from Shewanella putrefaciens (strain CN-32 / ATCC BAA-453).